We begin with the raw amino-acid sequence, 89 residues long: Teretoxin Tan22.12 (89 aa).

A signal peptide spans 1–22 (MKVLFTLAMIVVTLCLGQRMRR).

The protein belongs to the teretoxin C (TC) superfamily. In terms of processing, contains 4 disulfide bonds. In terms of tissue distribution, expressed by the venom duct.

It is found in the secreted. The protein is Teretoxin Tan22.12 of Terebra anilis (Auger snail).